Here is a 66-residue protein sequence, read N- to C-terminus: Large ribosomal subunit protein bL35 (66 aa).

Residues 1–16 are compositionally biased toward basic residues; sequence MPKMKTHKGSAKRFKK. The tract at residues 1 to 24 is disordered; it reads MPKMKTHKGSAKRFKKTGTGQLKR.

This sequence belongs to the bacterial ribosomal protein bL35 family.

This is Large ribosomal subunit protein bL35 from Anoxybacillus flavithermus (strain DSM 21510 / WK1).